Consider the following 269-residue polypeptide: Putative pyruvate, phosphate dikinase regulatory protein (269 aa).

Residue 151–158 (GVSRSSKT) coordinates ADP.

The protein belongs to the pyruvate, phosphate/water dikinase regulatory protein family. PDRP subfamily.

The enzyme catalyses N(tele)-phospho-L-histidyl/L-threonyl-[pyruvate, phosphate dikinase] + ADP = N(tele)-phospho-L-histidyl/O-phospho-L-threonyl-[pyruvate, phosphate dikinase] + AMP + H(+). The catalysed reaction is N(tele)-phospho-L-histidyl/O-phospho-L-threonyl-[pyruvate, phosphate dikinase] + phosphate + H(+) = N(tele)-phospho-L-histidyl/L-threonyl-[pyruvate, phosphate dikinase] + diphosphate. Bifunctional serine/threonine kinase and phosphorylase involved in the regulation of the pyruvate, phosphate dikinase (PPDK) by catalyzing its phosphorylation/dephosphorylation. The protein is Putative pyruvate, phosphate dikinase regulatory protein of Geobacter metallireducens (strain ATCC 53774 / DSM 7210 / GS-15).